A 648-amino-acid polypeptide reads, in one-letter code: Biosynthetic arginine decarboxylase (648 aa).

Lys109 carries the N6-(pyridoxal phosphate)lysine modification. 291–301 contributes to the substrate binding site; sequence LDVGGGLGVDY.

It belongs to the Orn/Lys/Arg decarboxylase class-II family. SpeA subfamily. Requires Mg(2+) as cofactor. Pyridoxal 5'-phosphate is required as a cofactor.

The catalysed reaction is L-arginine + H(+) = agmatine + CO2. Functionally, catalyzes the biosynthesis of agmatine from arginine. The sequence is that of Biosynthetic arginine decarboxylase from Prochlorococcus marinus (strain SARG / CCMP1375 / SS120).